Consider the following 580-residue polypeptide: NADH-ubiquinone oxidoreductase chain 5 (580 aa).

16 consecutive transmembrane segments (helical) span residues phenylalanine 12 to methionine 32, isoleucine 50 to isoleucine 70, isoleucine 92 to isoleucine 112, serine 113 to glutamine 133, valine 153 to tyrosine 173, methionine 183 to phenylalanine 203, threonine 215 to isoleucine 235, tryptophan 244 to glycine 264, isoleucine 274 to glycine 293, alanine 298 to isoleucine 320, cysteine 343 to tyrosine 363, leucine 367 to phenylalanine 387, isoleucine 427 to leucine 447, leucine 463 to phenylalanine 483, phenylalanine 496 to leucine 516, and isoleucine 560 to asparagine 580.

The protein belongs to the complex I subunit 5 family.

The protein localises to the mitochondrion inner membrane. The enzyme catalyses a ubiquinone + NADH + 5 H(+)(in) = a ubiquinol + NAD(+) + 4 H(+)(out). Core subunit of the mitochondrial membrane respiratory chain NADH dehydrogenase (Complex I) that is believed to belong to the minimal assembly required for catalysis. Complex I functions in the transfer of electrons from NADH to the respiratory chain. The immediate electron acceptor for the enzyme is believed to be ubiquinone. The sequence is that of NADH-ubiquinone oxidoreductase chain 5 (mt:ND5) from Anopheles gambiae (African malaria mosquito).